A 428-amino-acid polypeptide reads, in one-letter code: Probable 4-methylmuconolactone transporter (428 aa).

Over 1-26 (MFAWYKAGSPQQKKTFWACYSGWALD) the chain is Cytoplasmic. Residues 27 to 47 (SFDMQMFSFLLPALTLTWGLT) traverse the membrane as a helical segment. The Periplasmic portion of the chain corresponds to 48–50 (KAE). The helical transmembrane segment at 51 to 71 (VGVLGTVALVVTAIGGWGAGI) threads the bilayer. Over 72–80 (LSDRYGRAR) the chain is Cytoplasmic. A helical membrane pass occupies residues 81-101 (ILVLAIIWFTLFGVLAGFAQS). Residues 102–110 (YQQLLIART) lie on the Periplasmic side of the membrane. A helical membrane pass occupies residues 111–131 (LQGLGFGGEWAVGAALMAEVI). The Cytoplasmic portion of the chain corresponds to 132 to 145 (DSRHRGKAIGFVQS). A helical transmembrane segment spans residues 146–166 (GFALGWALAVVVATLLLAWLP). Lysine 167 is a topological domain (periplasmic). The chain crosses the membrane as a helical span at residues 168-188 (EMAWRVAFWSGIIPALIVLFI). Residues 189 to 227 (RRHVKDSSMFERARQSRAPRASLSSVFNRKYARTLALSS) lie on the Cytoplasmic side of the membrane. Residues 228 to 248 (VLVIGLQAGCYAILVWLPSLL) form a helical membrane-spanning segment. At 249–252 (NQRQ) the chain is on the periplasmic side. The helical transmembrane segment at 253–273 (VAAGSMIVTVFIMAFGSFCGF) threads the bilayer. At 274–287 (AVTADLSDRIGRRP) the chain is on the cytoplasmic side. Residues 288 to 308 (TLILLSVCAWIVTVSYMLLPL) traverse the membrane as a helical segment. The Periplasmic portion of the chain corresponds to 309–314 (NTTLTA). A helical membrane pass occupies residues 315-335 (ILGFLVGFSAIGMFAALGPFL). Over 336–356 (SELFPTNVRTTCMGFAYNVGK) the chain is Cytoplasmic. A helical transmembrane segment spans residues 357–371 (SIGAGSVVGVGVLST). Residues 372–377 (HIGLAN) lie on the Periplasmic side of the membrane. Residues 378–398 (AMGTFCLVAYAFAVFGIMLLP) form a helical membrane-spanning segment. At 399–428 (ETRGIAIENIGEADAHSPAAPLAQPASARS) the chain is on the cytoplasmic side.

It belongs to the major facilitator superfamily. Sugar transporter (TC 2.A.1.1) family.

It localises to the cell inner membrane. Functionally, probable uptake of 4-methylmuconolactone. The sequence is that of Probable 4-methylmuconolactone transporter from Cupriavidus pinatubonensis (strain JMP 134 / LMG 1197) (Cupriavidus necator (strain JMP 134)).